Here is a 231-residue protein sequence, read N- to C-terminus: L-ribulose-5-phosphate 4-epimerase (231 aa).

Residues 27-28, 44-45, and 73-74 contribute to the substrate site; these read GN, SG, and SS. Zn(2+) contacts are provided by D75, H94, and H96. The active-site Proton donor/acceptor is the D119. H168 is a binding site for Zn(2+). The Proton donor/acceptor role is filled by Y226.

It belongs to the aldolase class II family. AraD/FucA subfamily. The cofactor is Zn(2+).

It catalyses the reaction L-ribulose 5-phosphate = D-xylulose 5-phosphate. It functions in the pathway carbohydrate degradation; L-arabinose degradation via L-ribulose; D-xylulose 5-phosphate from L-arabinose (bacterial route): step 3/3. Its function is as follows. Involved in the degradation of L-arabinose. Catalyzes the interconversion of L-ribulose 5-phosphate (LRu5P) and D-xylulose 5-phosphate (D-Xu5P) via a retroaldol/aldol mechanism (carbon-carbon bond cleavage analogous to a class II aldolase reaction). In Halalkalibacterium halodurans (strain ATCC BAA-125 / DSM 18197 / FERM 7344 / JCM 9153 / C-125) (Bacillus halodurans), this protein is L-ribulose-5-phosphate 4-epimerase (araD).